The primary structure comprises 54 residues: Light-harvesting protein B-880 beta chain (54 aa).

Topologically, residues 1–20 are cytoplasmic; that stretch reads AEDRSSLSGVSDAEAKEFHA. A bacteriochlorophyll is bound by residues H19 and H37. The chain crosses the membrane as a helical span at residues 21-43; the sequence is LFVSSFTAFIVIAVLAHVLAWAW. At 44–54 the chain is on the periplasmic side; that stretch reads RPWIPGPKGWA.

The protein belongs to the antenna complex beta subunit family. As to quaternary structure, the core complex is formed by different alpha and beta chains, binding bacteriochlorophyll molecules, and arranged most probably in tetrameric structures disposed around the reaction center. The non-pigmented gamma chains may constitute additional components.

It is found in the cell inner membrane. Functionally, antenna complexes are light-harvesting systems, which transfer the excitation energy to the reaction centers. This chain is Light-harvesting protein B-880 beta chain, found in Rhodoblastus acidophilus (Rhodopseudomonas acidophila).